Consider the following 107-residue polypeptide: Antimicrobial peptide damicornin (107 aa).

The signal sequence occupies residues 1–22; that stretch reads MKVLVILFGAMLVLMEFQKASA. The propeptide occupies 23 to 67; the sequence is ATLLEDFDDDDDLLDDGGDFDLEANSDASSGNGNDSNDAVPEKRR. A compositionally biased stretch (acidic residues) spans 37–46; the sequence is DDGGDFDLEA. The interval 37–62 is disordered; it reads DDGGDFDLEANSDASSGNGNDSNDAV. A compositionally biased stretch (low complexity) spans 47 to 61; the sequence is NSDASSGNGNDSNDA. Disulfide bonds link C69/C105, C78/C99, and C85/C103. R106 is subject to Arginine amide.

Belongs to the coral AMP family. In terms of tissue distribution, is specifically expressed in the granular cells of the ectoderm.

The protein resides in the cytoplasm. It is found in the stress granule. Its subcellular location is the secreted. Functionally, cationic peptide with probable antimicrobial activity against coral pathogens. Shows in vitro activity against Gram-positive bacteria and the filamentous fungus F.oxysporum (MIC=1.25 uM). Gram-positive bacteria tested are B.megaterium (MIC=20 uM), S.aureus (MIC=5 uM), M. luteus (MIC=1.25 uM), B.stationis (MIC=10 uM), M.maritypicum (MIC=20 uM). Has no or little effect against Gram-negative bacteria (the coral pathogen V.coralliilyticus (MIC&gt;20 uM), V.aesturianus (MIC&gt;20 uM), V.shiloi (MIC&gt;20 uM), and E.coli (MIC=10 uM)). Has no hemolytic activity against sheep erythrocytes. The sequence is that of Antimicrobial peptide damicornin from Pocillopora damicornis (Cauliflower coral).